A 172-amino-acid polypeptide reads, in one-letter code: Myosin regulatory light chain 12B (172 aa).

Residues 1–16 show a composition bias toward basic residues; sequence MSSKKAKTKTTKKRPQ. The disordered stretch occupies residues 1–20; that stretch reads MSSKKAKTKTTKKRPQRATS. Phosphothreonine; by MLCK and ZIPK/DAPK3 is present on Thr-19. The residue at position 20 (Ser-20) is a Phosphoserine; by MLCK and ZIPK/DAPK3. EF-hand domains follow at residues 29-64, 98-133, and 134-169; these read SQIQ…LGKN, DPED…MGDR, and FTDE…GAKD. Ca(2+)-binding residues include Asp-42, Asn-44, Asp-46, and Asp-53.

Myosin is a hexamer of 2 heavy chains and 4 light chains: interacts with myosin heavy chain MYO19. Post-translationally, phosphorylation increases the actin-activated myosin ATPase activity and thereby regulates the contractile activity. It is required to generate the driving force in the migration of the cells but not necessary for localization of myosin-2 at the leading edge. Phosphorylation is reduced following epigallocatechin-3-O-gallate treatment. In terms of tissue distribution, ubiquitously expressed in various hematopoietic cells.

Functionally, myosin regulatory subunit that plays an important role in regulation of both smooth muscle and nonmuscle cell contractile activity via its phosphorylation. Phosphorylation triggers actin polymerization in vascular smooth muscle. Implicated in cytokinesis, receptor capping, and cell locomotion. In Homo sapiens (Human), this protein is Myosin regulatory light chain 12B (MYL12B).